The chain runs to 399 residues: Dual-specificity RNA methyltransferase RlmN (399 aa).

Glu-122 (proton acceptor) is an active-site residue. In terms of domain architecture, Radical SAM core spans 128 to 371; that stretch reads ETDRGTLCVS…VRTPRGRDIL (244 aa). A disulfide bond links Cys-135 and Cys-374. Residues Cys-142, Cys-146, and Cys-149 each contribute to the [4Fe-4S] cluster site. S-adenosyl-L-methionine-binding positions include 200–201, Ser-232, 254–256, and Asn-331; these read GE and SLH. Cys-374 functions as the S-methylcysteine intermediate in the catalytic mechanism.

Belongs to the radical SAM superfamily. RlmN family. [4Fe-4S] cluster is required as a cofactor.

The protein localises to the cytoplasm. The enzyme catalyses adenosine(2503) in 23S rRNA + 2 reduced [2Fe-2S]-[ferredoxin] + 2 S-adenosyl-L-methionine = 2-methyladenosine(2503) in 23S rRNA + 5'-deoxyadenosine + L-methionine + 2 oxidized [2Fe-2S]-[ferredoxin] + S-adenosyl-L-homocysteine. The catalysed reaction is adenosine(37) in tRNA + 2 reduced [2Fe-2S]-[ferredoxin] + 2 S-adenosyl-L-methionine = 2-methyladenosine(37) in tRNA + 5'-deoxyadenosine + L-methionine + 2 oxidized [2Fe-2S]-[ferredoxin] + S-adenosyl-L-homocysteine. Specifically methylates position 2 of adenine 2503 in 23S rRNA and position 2 of adenine 37 in tRNAs. m2A2503 modification seems to play a crucial role in the proofreading step occurring at the peptidyl transferase center and thus would serve to optimize ribosomal fidelity. In Rhodopseudomonas palustris (strain TIE-1), this protein is Dual-specificity RNA methyltransferase RlmN.